A 156-amino-acid polypeptide reads, in one-letter code: Ribosome maturation factor RimP (156 aa).

It belongs to the RimP family.

Its subcellular location is the cytoplasm. In terms of biological role, required for maturation of 30S ribosomal subunits. The sequence is that of Ribosome maturation factor RimP from Bacillus thuringiensis (strain Al Hakam).